Reading from the N-terminus, the 213-residue chain is Transcription antitermination protein NusB (213 aa).

This sequence belongs to the NusB family.

In terms of biological role, involved in transcription antitermination. Required for transcription of ribosomal RNA (rRNA) genes. Binds specifically to the boxA antiterminator sequence of the ribosomal RNA (rrn) operons. This chain is Transcription antitermination protein NusB, found in Nostoc punctiforme (strain ATCC 29133 / PCC 73102).